Here is a 178-residue protein sequence, read N- to C-terminus: Large ribosomal subunit protein uL13m (178 aa).

It belongs to the universal ribosomal protein uL13 family. Component of the mitochondrial ribosome large subunit (39S) which comprises a 16S rRNA and about 50 distinct proteins. Interacts with OXA1L.

The protein localises to the mitochondrion. This Bos taurus (Bovine) protein is Large ribosomal subunit protein uL13m (MRPL13).